A 142-amino-acid polypeptide reads, in one-letter code: Large ribosomal subunit protein uL11 (142 aa).

Belongs to the universal ribosomal protein uL11 family. In terms of assembly, part of the ribosomal stalk of the 50S ribosomal subunit. Interacts with L10 and the large rRNA to form the base of the stalk. L10 forms an elongated spine to which L12 dimers bind in a sequential fashion forming a multimeric L10(L12)X complex. In terms of processing, one or more lysine residues are methylated.

Forms part of the ribosomal stalk which helps the ribosome interact with GTP-bound translation factors. The chain is Large ribosomal subunit protein uL11 from Pseudoalteromonas translucida (strain TAC 125).